The primary structure comprises 217 residues: uncharacterized protein (217 aa).

The next 4 membrane-spanning stretches (helical) occupy residues 9-29, 54-74, 103-125, and 135-157; these read ISLA…LSTI, FLST…LLEL, LMAY…RFLS, and IVFW…ASYI.

Belongs to the DP1 family.

It is found in the endoplasmic reticulum membrane. This is an uncharacterized protein from Schizosaccharomyces pombe (strain 972 / ATCC 24843) (Fission yeast).